The following is a 323-amino-acid chain: Sphingomyelinase D (323 aa).

A signal peptide spans 1 to 20 (MISLLRLCSFLAAGSILVQG). His59 is a catalytic residue. Mg(2+)-binding residues include Glu79, Asp81, and Asp127. An SMD-tail motif is present at residues 308–315 (ATNDDNPW).

This sequence belongs to the sphingomyelinase D/phospholipase D family. The cofactor is Mg(2+).

It is found in the secreted. It carries out the reaction a sphingomyelin + H2O = an N-acylsphing-4-enine 1-phosphate + choline + H(+). Its function is as follows. Catalyzes the hydrolysis of sphingomyelin. Sphingomyelinases D are produced by some spider in their venoms, but also by arthropods such as ticks, or pathogenic bacteria and fungi. They might play a role in pathogenicity through different mechanisms, such as membrane destabilization and host cell penetration, but also pulmonary inflammation and cutaneous lesions. This is Sphingomyelinase D from Trichophyton rubrum (strain ATCC MYA-4607 / CBS 118892) (Athlete's foot fungus).